The following is a 345-amino-acid chain: Splicing factor YJU2 (345 aa).

Zn(2+) contacts are provided by Cys43, Cys46, Cys80, and Cys83. The tract at residues 205-345 (KRLRDSDSEE…YSDSDDSSSD (141 aa)) is disordered. Positions 217 to 232 (ENAKERSKKHIADKPT) are enriched in basic and acidic residues. Composition is skewed to low complexity over residues 308 to 317 (SSITSSSASS) and 327 to 337 (GSSLGLLGAYS).

The protein belongs to the CWC16 family. YJU2 subfamily. Component of the spliceosome. Present in the activated B complex, the catalytically activated B* complex which catalyzes the branching, the catalytic step 1 C complex catalyzing the exon ligation, and the postcatalytic P complex containing the ligated exons (mRNA) and the excised lariat intron.

The protein localises to the nucleus. Part of the spliceosome which catalyzes two sequential transesterification reactions, first the excision of the non-coding intron from pre-mRNA and then the ligation of the coding exons to form the mature mRNA. Plays a role in stabilizing the structure of the spliceosome catalytic core and docking of the branch helix into the active site, producing 5'-exon and lariat intron-3'-intermediates. May protect cells from TP53-dependent apoptosis upon dsDNA break damage through association with PRP19-CD5L complex. This Danio rerio (Zebrafish) protein is Splicing factor YJU2.